The sequence spans 201 residues: Recombination protein RecR (201 aa).

The C4-type zinc-finger motif lies at 60-75 (CSVCGNIDTTDPCSIC). Residues 83–178 (GTIIVVEDIS…KITRLAHGVP (96 aa)) enclose the Toprim domain.

It belongs to the RecR family.

In terms of biological role, may play a role in DNA repair. It seems to be involved in an RecBC-independent recombinational process of DNA repair. It may act with RecF and RecO. In Bartonella bacilliformis (strain ATCC 35685 / KC583 / Herrer 020/F12,63), this protein is Recombination protein RecR.